We begin with the raw amino-acid sequence, 309 residues long: G-protein coupled receptor 35 (309 aa).

Over 1 to 24 the chain is Extracellular; that stretch reads MNGTYNTCGSSDLTWPPAIKLGFY. Asn-2 is a glycosylation site (N-linked (GlcNAc...) asparagine). A helical transmembrane segment spans residues 25–45; it reads AYLGVLLVLGLLLNSLALWVF. Topologically, residues 46–56 are cytoplasmic; that stretch reads CCRMQQWTETR. Residues 57 to 77 form a helical membrane-spanning segment; that stretch reads IYMTNLAVADLCLLCTLPFVL. At 78–90 the chain is on the extracellular side; the sequence is HSLRDTSDTPLCQ. Cys-89 and Cys-162 are joined by a disulfide. Residues 91-112 traverse the membrane as a helical segment; sequence LSQGIYLTNRYMSISLVTAIAV. Residues 113-135 lie on the Cytoplasmic side of the membrane; sequence DRYVAVRHPLRARGLRSPRQAAA. Residues 136–156 form a helical membrane-spanning segment; the sequence is VCAVLWVLVIGSLVARWLLGI. Residues 157–174 are Extracellular-facing; sequence QEGGFCFRSTRHNFNSMA. Residues 175-195 form a helical membrane-spanning segment; sequence FPLLGFYLPLAVVVFCSLKVV. At 196–218 the chain is on the cytoplasmic side; the sequence is TALAQRPPTDVGQAEATRKAARM. Residues 219–239 form a helical membrane-spanning segment; sequence VWANLLVFVVCFLPLHVGLTV. Topologically, residues 240–258 are extracellular; it reads RLAVGWNACALLETIRRAL. The chain crosses the membrane as a helical span at residues 259–279; the sequence is YITSKLSDANCCLDAICYYYM. The Cytoplasmic portion of the chain corresponds to 280–309; sequence AKEFQEASALAVAPSAKAHKSQDSLCVTLA. Residues Ser-287 and Ser-294 each carry the phosphoserine modification. A phosphoserine; by GRK5 and GRK6 mark is found at Ser-300 and Ser-303. Position 307 is a phosphothreonine (Thr-307).

It belongs to the G-protein coupled receptor 1 family. Interacts with GNA13. Interacts with ARRB2. Post-translationally, multiply phosphorylated in clusters of serines and threonines in the C-terminal tail. Phosphorylation of Ser-300 and Ser-303 is mediated by GRK5 and/or GRK6. In terms of tissue distribution, predominantly expressed in immune and gastrointestinal tissues.

It is found in the cell membrane. In terms of biological role, G-protein coupled receptor that binds to several ligands including the tryptophan metabolite kynurenic acid (KYNA), lysophosphatidic acid (LPA) or 5-hydroxyindoleacetic acid (5-HIAA) with high affinity, leading to rapid and transient activation of numerous intracellular signaling pathways. Plays a role in neutrophil recruitment to sites of inflammation and bacterial clearance through the major serotonin metabolite 5-HIAA that acts as a physiological ligand. Stimulates lipid metabolism, thermogenic, and anti-inflammatory gene expression in adipose tissue once activated by kynurenic acid. In macrophages, activation by lysophosphatidic acid promotes GPR35-induced signaling with a distinct transcriptional profile characterized by TNF production associated with ERK and NF-kappa-B activation. In turn, induces chemotaxis of macrophages. This chain is G-protein coupled receptor 35 (GPR35), found in Homo sapiens (Human).